Reading from the N-terminus, the 166-residue chain is Small ribosomal subunit protein uS5 (166 aa).

Residues 12–75 (YIEKLVQVNR…EAARRNMIQV (64 aa)) form the S5 DRBM domain.

This sequence belongs to the universal ribosomal protein uS5 family. As to quaternary structure, part of the 30S ribosomal subunit. Contacts proteins S4 and S8.

In terms of biological role, with S4 and S12 plays an important role in translational accuracy. Located at the back of the 30S subunit body where it stabilizes the conformation of the head with respect to the body. The sequence is that of Small ribosomal subunit protein uS5 from Azotobacter vinelandii (strain DJ / ATCC BAA-1303).